Consider the following 257-residue polypeptide: Hydroxyacylglutathione hydrolase (257 aa).

Zn(2+)-binding residues include H55, H57, D59, H60, H112, D129, and H167.

This sequence belongs to the metallo-beta-lactamase superfamily. Glyoxalase II family. Monomer. Requires Zn(2+) as cofactor.

It catalyses the reaction an S-(2-hydroxyacyl)glutathione + H2O = a 2-hydroxy carboxylate + glutathione + H(+). It functions in the pathway secondary metabolite metabolism; methylglyoxal degradation; (R)-lactate from methylglyoxal: step 2/2. Thiolesterase that catalyzes the hydrolysis of S-D-lactoyl-glutathione to form glutathione and D-lactic acid. The sequence is that of Hydroxyacylglutathione hydrolase from Pseudoalteromonas translucida (strain TAC 125).